Here is a 397-residue protein sequence, read N- to C-terminus: Elongation factor Tu (397 aa).

Positions 10-206 (KPHVNIGTIG…AVDEYIPTPE (197 aa)) constitute a tr-type G domain. Positions 19-26 (GHVDHGKT) are G1. 19 to 26 (GHVDHGKT) contacts GTP. Threonine 26 lines the Mg(2+) pocket. Positions 60–64 (GITIS) are G2. The G3 stretch occupies residues 81 to 84 (DCPG). GTP is bound by residues 81–85 (DCPGH) and 136–139 (NKAD). Positions 136 to 139 (NKAD) are G4. A G5 region spans residues 174–176 (SAL).

The protein belongs to the TRAFAC class translation factor GTPase superfamily. Classic translation factor GTPase family. EF-Tu/EF-1A subfamily. Monomer.

It localises to the cytoplasm. The catalysed reaction is GTP + H2O = GDP + phosphate + H(+). GTP hydrolase that promotes the GTP-dependent binding of aminoacyl-tRNA to the A-site of ribosomes during protein biosynthesis. In Clostridium tetani (strain Massachusetts / E88), this protein is Elongation factor Tu.